The following is a 310-amino-acid chain: p-hydroxybenzoic acid efflux pump subunit AaeA (310 aa).

A helical membrane pass occupies residues 12–32 (AITLVLVILAFIAIFRAWVYY).

The protein belongs to the membrane fusion protein (MFP) (TC 8.A.1) family.

It is found in the cell inner membrane. Functionally, forms an efflux pump with AaeB. The sequence is that of p-hydroxybenzoic acid efflux pump subunit AaeA from Escherichia fergusonii (strain ATCC 35469 / DSM 13698 / CCUG 18766 / IAM 14443 / JCM 21226 / LMG 7866 / NBRC 102419 / NCTC 12128 / CDC 0568-73).